The chain runs to 697 residues: U-box domain-containing protein 18 (697 aa).

Residues 23-210 (SISIVTLLDS…INRILDHVGI (188 aa)) form a U-box N-terminal domain (UND) required for EXO70B1 binding and crucial for the negative regulation of ABA-dependent stomatal movement region. One can recognise a U-box domain in the interval 287–361 (LKVEDLLCPI…RKHCKTNGIV (75 aa)). ARM repeat units lie at residues 420-459 (SFNR…NLSK), 461-500 (VTGK…YLSS), 502-544 (EDYS…GLLM), 546-587 (SDNH…KLAE), 589-631 (PDGT…NLCL), and 657-696 (NGEY…FVHA).

In terms of assembly, interacts with EXO70B1 via its U-box N-terminal domain (UND).

The protein localises to the endomembrane system. It catalyses the reaction S-ubiquitinyl-[E2 ubiquitin-conjugating enzyme]-L-cysteine + [acceptor protein]-L-lysine = [E2 ubiquitin-conjugating enzyme]-L-cysteine + N(6)-ubiquitinyl-[acceptor protein]-L-lysine.. It functions in the pathway protein modification; protein ubiquitination. Functionally, functions as an E3 ubiquitin ligase. Mediates EXO70B1 ubiquitination. Involved in the regulation of abscisic acid (ABA)-mediated stomatal movements. The protein is U-box domain-containing protein 18 of Arabidopsis thaliana (Mouse-ear cress).